Here is a 491-residue protein sequence, read N- to C-terminus: 3-octaprenyl-4-hydroxybenzoate carboxy-lyase (491 aa).

Residue Asn172 coordinates Mn(2+). Residues 175-177 (IYR), 189-191 (RWL), and 194-195 (RG) each bind prenylated FMN. Glu238 is a binding site for Mn(2+). Asp287 (proton donor) is an active-site residue.

Belongs to the UbiD family. In terms of assembly, homohexamer. It depends on prenylated FMN as a cofactor. The cofactor is Mn(2+).

The protein resides in the cell membrane. It carries out the reaction a 4-hydroxy-3-(all-trans-polyprenyl)benzoate + H(+) = a 2-(all-trans-polyprenyl)phenol + CO2. It functions in the pathway cofactor biosynthesis; ubiquinone biosynthesis. In terms of biological role, catalyzes the decarboxylation of 3-octaprenyl-4-hydroxy benzoate to 2-octaprenylphenol, an intermediate step in ubiquinone biosynthesis. In Klebsiella pneumoniae subsp. pneumoniae (strain ATCC 700721 / MGH 78578), this protein is 3-octaprenyl-4-hydroxybenzoate carboxy-lyase.